Here is a 677-residue protein sequence, read N- to C-terminus: Zinc finger and BTB domain-containing protein 5 (677 aa).

The 70-residue stretch at 24 to 93 (CDCVIVVGNR…MYTSTLMLGE (70 aa)) folds into the BTB domain. A compositionally biased stretch (polar residues) spans 158–181 (LNSSQNGEEQPAPMSSSMRSNLDQ). Disordered stretches follow at residues 158–252 (LNSS…MTDN) and 287–312 (SMAS…SFQC). The residue at position 234 (serine 234) is a Phosphoserine. Lysine 239 is covalently cross-linked (Glycyl lysine isopeptide (Lys-Gly) (interchain with G-Cter in SUMO2)). A compositionally biased stretch (polar residues) spans 287–300 (SMASRATQVETSFD). Residues lysine 322 and lysine 330 each participate in a glycyl lysine isopeptide (Lys-Gly) (interchain with G-Cter in SUMO2) cross-link. Residues 331–387 (SEPLSSPEPQDEVSDVTSQAEGSESVEVEGVVVSAEKIDLSPESSDRSFSDPQSSTD) form a disordered region. A compositionally biased stretch (low complexity) spans 350–365 (AEGSESVEVEGVVVSA). Residues 366 to 379 (EKIDLSPESSDRSF) are compositionally biased toward basic and acidic residues. Serine 371 is subject to Phosphoserine. Residues lysine 404 and lysine 415 each participate in a glycyl lysine isopeptide (Lys-Gly) (interchain with G-Cter in SUMO2) cross-link. The tract at residues 447–474 (LLSPEAGPAGGPSSAPGSHVENPFSEPA) is disordered. The span at 449–464 (SPEAGPAGGPSSAPGS) shows a compositional bias: low complexity. Lysine 541 participates in a covalent cross-link: Glycyl lysine isopeptide (Lys-Gly) (interchain with G-Cter in SUMO2). Residues 552–576 (QIPENSTSSQLMMNGATSSFENGHP) are compositionally biased toward polar residues. The interval 552–585 (QIPENSTSSQLMMNGATSSFENGHPSQPGPPQLT) is disordered. Glycyl lysine isopeptide (Lys-Gly) (interchain with G-Cter in SUMO2) cross-links involve residues lysine 594 and lysine 597. The segment at 613–635 (YACKICCKTFLTLTDCKKHIRVH) adopts a C2H2-type 1 zinc-finger fold. Residues 641 to 664 (YACLKCGKRFSQSSHLYKHSKTTC) form a C2H2-type 2; atypical zinc finger. Glycyl lysine isopeptide (Lys-Gly) (interchain with G-Cter in SUMO2) cross-links involve residues lysine 645 and lysine 658.

It localises to the nucleus. Its function is as follows. May be involved in transcriptional regulation. This is Zinc finger and BTB domain-containing protein 5 (ZBTB5) from Homo sapiens (Human).